The chain runs to 288 residues: MTMTLAVYGKGGIGKSTTSCNISVALAKRGKKVLQIGCDPKHDSTFTLTGFLIPTIIDTLQEKDFHYEDIWPEDVIYKGYGGVDCVEAGGPPAGAGCGGYVVGETVKLLKELNAFDEYDVILFDVLGDVVCGGFAAPLNYADYCLIVTDNGFDALFAANRIAASVREKARTHPLRLAGLIGNRTSKRDLIEKYVSHVPMPVLEVLPLIEDIRVSRVKGKTLFEMAEGDSMLDYVCDFYLNIADQVLAAPEGVVPSEASDRELFSLLSDYYLNPPVEKTQEDELDLMMV.

ATP-binding positions include 12–17 (GIGKST) and K41. A Mg(2+)-binding site is contributed by S16. Residues C97 and C131 each coordinate [4Fe-4S] cluster. ATP is bound at residue 182-183 (NR).

It belongs to the NifH/BchL/ChlL family. As to quaternary structure, homodimer. Protochlorophyllide reductase is composed of three subunits; ChlL, ChlN and ChlB. The cofactor is [4Fe-4S] cluster.

It carries out the reaction chlorophyllide a + oxidized 2[4Fe-4S]-[ferredoxin] + 2 ADP + 2 phosphate = protochlorophyllide a + reduced 2[4Fe-4S]-[ferredoxin] + 2 ATP + 2 H2O. It functions in the pathway porphyrin-containing compound metabolism; chlorophyll biosynthesis (light-independent). Component of the dark-operative protochlorophyllide reductase (DPOR) that uses Mg-ATP and reduced ferredoxin to reduce ring D of protochlorophyllide (Pchlide) to form chlorophyllide a (Chlide). This reaction is light-independent. The L component serves as a unique electron donor to the NB-component of the complex, and binds Mg-ATP. The protein is Light-independent protochlorophyllide reductase iron-sulfur ATP-binding protein of Picosynechococcus sp. (strain ATCC 27264 / PCC 7002 / PR-6) (Agmenellum quadruplicatum).